A 412-amino-acid chain; its full sequence is Major facilitator superfamily domain-containing protein 3 (412 aa).

A run of 12 helical transmembrane segments spans residues Gly10–Leu30, Val40–Val60, Ser73–Gly93, Gln94–Met114, Val138–Leu158, Leu166–Ala186, Val209–Glu229, Leu250–Gly270, Leu291–Met311, Ala321–Thr341, Leu361–Ala381, and Leu384–Leu404.

This sequence belongs to the major facilitator superfamily.

The protein localises to the membrane. The protein is Major facilitator superfamily domain-containing protein 3 (MFSD3) of Homo sapiens (Human).